Reading from the N-terminus, the 245-residue chain is Thiopurine S-methyltransferase (245 aa).

29 to 40 (WREKWVDGKIGF) is an S-adenosyl-L-methionine binding site. Phe-40 is a substrate binding site. Lys-58 is subject to N6-acetyllysine. S-adenosyl-L-methionine contacts are provided by Leu-69, Glu-90, and Arg-152.

It belongs to the class I-like SAM-binding methyltransferase superfamily. TPMT family. As to quaternary structure, monomer.

Its subcellular location is the cytoplasm. The catalysed reaction is S-adenosyl-L-methionine + a thiopurine = S-adenosyl-L-homocysteine + a thiopurine S-methylether.. The chain is Thiopurine S-methyltransferase (TPMT) from Panthera pardus (Leopard).